Here is a 247-residue protein sequence, read N- to C-terminus: Carboxy-S-adenosyl-L-methionine synthase (247 aa).

Residues Y39, G64–S66, D89–N90, D117–I118, N132, and R199 contribute to the S-adenosyl-L-methionine site.

The protein belongs to the class I-like SAM-binding methyltransferase superfamily. Cx-SAM synthase family. As to quaternary structure, homodimer.

It catalyses the reaction prephenate + S-adenosyl-L-methionine = carboxy-S-adenosyl-L-methionine + 3-phenylpyruvate + H2O. In terms of biological role, catalyzes the conversion of S-adenosyl-L-methionine (SAM) to carboxy-S-adenosyl-L-methionine (Cx-SAM). The chain is Carboxy-S-adenosyl-L-methionine synthase from Escherichia coli (strain K12 / MC4100 / BW2952).